Reading from the N-terminus, the 29-residue chain is Small toxic protein TisB (29 aa).

Residues 6 to 28 (IAILILKLIVAALQLLDAVLKYL) form a helical membrane-spanning segment.

The protein resides in the cell inner membrane. Its function is as follows. Toxic component of a type I toxin-antitoxin (TA) system. Overexpression causes cessation of growth, induces stress-response, a number of membrane protein genes, and leads to cell death. Inhibits ATP synthesis, ATP levels drop drastically quickly after induction. Part of the programmed response to DNA damage; damage leads to increased accumulation of the protein which slows or stops bacterial growth, probably allowing DNA repair before cells continue to grow. This chain is Small toxic protein TisB (tisB), found in Escherichia coli (strain K12).